The primary structure comprises 32 residues: uncharacterized protein (32 aa).

This is an uncharacterized protein from Treponema pallidum (strain Nichols).